A 148-amino-acid polypeptide reads, in one-letter code: ASCH domain-containing ribonuclease (148 aa).

Residues 13 to 70 form the ASCH domain; sequence SLWPEFAKAIVSGKKTVEFRRRIPLPALSARIWIYATRPVKSVIGFAYLEAIVQGDVN.

The cofactor is Mn(2+). Requires Ni(2+) as cofactor.

Shows sequence-specific endoribonuclease activity towards single-stranded RNA (ssRNA), with a preference for the bond between pyrimidine and adenine nucleotides. May also have 5'-exonuclease activity. The protein is ASCH domain-containing ribonuclease of Zymomonas mobilis subsp. mobilis (strain ATCC 10988 / DSM 424 / LMG 404 / NCIMB 8938 / NRRL B-806 / ZM1).